The following is a 635-amino-acid chain: MAGUK p55 subfamily member 4 (635 aa).

Over residues 1 to 16 (MRQSDRGAELTNEDRA) the composition is skewed to basic and acidic residues. Positions 1–23 (MRQSDRGAELTNEDRALPTPPDP) are disordered. L27 domains lie at 23–79 (PENG…EKKL) and 86–136 (AQIL…FEPL). The PDZ domain maps to 153 to 234 (IVCLVKNQQP…TIMFKVIPVS (82 aa)). An SH3 domain is found at 241–311 (QKMVYVRAMI…PSNHLLKRKQ (71 aa)). The Guanylate kinase-like domain maps to 426–615 (HRLIVLVGPS…ACGQLLSAIQ (190 aa)). A coiled-coil region spans residues 567–622 (VDMKFKDEDLQEMEELAQKMESQFGQFFDHVIVNDNLQDACGQLLSAIQKAQEELQ).

It belongs to the MAGUK family. May interact with GRIA2. Interacts with MPDZ. Forms a complex with CRB1 and PALS1. Interacts with FASLG. In terms of tissue distribution, detected in the retina (at protein level). Highly enriched in the retina where it is mainly expressed by rod photoreceptors; detected in the inner segment of the photoreceptor layer and in the outer nuclear layer. Also detected at much lower levels in pineal gland, cerebellum, cortex, hippocampus, olfactory bulb, heart, liver and spleen. Expressed in the CA1-CA3 regions of pyramidal cell layers and in the granule cell layer of dentate gyrus in the hippocampus. In the cerebellum, expressed in Purkinje cells and throughout the granule cell layer. In the olfactory bulb, expressed in mitral cells.

It is found in the cytoplasm. Its function is as follows. May play a role in retinal photoreceptors development. This chain is MAGUK p55 subfamily member 4 (Mpp4), found in Mus musculus (Mouse).